The following is a 174-amino-acid chain: Crossover junction endodeoxyribonuclease RuvC (174 aa).

Residues aspartate 8, glutamate 67, and aspartate 139 contribute to the active site. Aspartate 8, glutamate 67, and aspartate 139 together coordinate Mg(2+).

Belongs to the RuvC family. In terms of assembly, homodimer which binds Holliday junction (HJ) DNA. The HJ becomes 2-fold symmetrical on binding to RuvC with unstacked arms; it has a different conformation from HJ DNA in complex with RuvA. In the full resolvosome a probable DNA-RuvA(4)-RuvB(12)-RuvC(2) complex forms which resolves the HJ. Mg(2+) is required as a cofactor.

The protein resides in the cytoplasm. It carries out the reaction Endonucleolytic cleavage at a junction such as a reciprocal single-stranded crossover between two homologous DNA duplexes (Holliday junction).. The RuvA-RuvB-RuvC complex processes Holliday junction (HJ) DNA during genetic recombination and DNA repair. Endonuclease that resolves HJ intermediates. Cleaves cruciform DNA by making single-stranded nicks across the HJ at symmetrical positions within the homologous arms, yielding a 5'-phosphate and a 3'-hydroxyl group; requires a central core of homology in the junction. The consensus cleavage sequence is 5'-(A/T)TT(C/G)-3'. Cleavage occurs on the 3'-side of the TT dinucleotide at the point of strand exchange. HJ branch migration catalyzed by RuvA-RuvB allows RuvC to scan DNA until it finds its consensus sequence, where it cleaves and resolves the cruciform DNA. In Pseudomonas syringae pv. syringae (strain B728a), this protein is Crossover junction endodeoxyribonuclease RuvC.